The sequence spans 86 residues: Small ribosomal subunit protein bS20 (86 aa).

This sequence belongs to the bacterial ribosomal protein bS20 family.

In terms of biological role, binds directly to 16S ribosomal RNA. This Oceanobacillus iheyensis (strain DSM 14371 / CIP 107618 / JCM 11309 / KCTC 3954 / HTE831) protein is Small ribosomal subunit protein bS20.